A 78-amino-acid polypeptide reads, in one-letter code: Defensin-like protein 141 (78 aa).

An N-terminal signal peptide occupies residues 1–24; that stretch reads MTKSIISAFFIILILGMMVNEIEG. Cystine bridges form between Cys-31–Cys-76, Cys-40–Cys-59, Cys-45–Cys-70, and Cys-49–Cys-72.

This sequence belongs to the DEFL family.

The protein localises to the secreted. The chain is Defensin-like protein 141 (LCR3) from Arabidopsis thaliana (Mouse-ear cress).